Reading from the N-terminus, the 342-residue chain is UDP-3-O-acylglucosamine N-acyltransferase (342 aa).

Histidine 238 acts as the Proton acceptor in catalysis.

It belongs to the transferase hexapeptide repeat family. LpxD subfamily. In terms of assembly, homotrimer.

It carries out the reaction a UDP-3-O-[(3R)-3-hydroxyacyl]-alpha-D-glucosamine + a (3R)-hydroxyacyl-[ACP] = a UDP-2-N,3-O-bis[(3R)-3-hydroxyacyl]-alpha-D-glucosamine + holo-[ACP] + H(+). The protein operates within bacterial outer membrane biogenesis; LPS lipid A biosynthesis. Functionally, catalyzes the N-acylation of UDP-3-O-acylglucosamine using 3-hydroxyacyl-ACP as the acyl donor. Is involved in the biosynthesis of lipid A, a phosphorylated glycolipid that anchors the lipopolysaccharide to the outer membrane of the cell. The protein is UDP-3-O-acylglucosamine N-acyltransferase of Tolumonas auensis (strain DSM 9187 / NBRC 110442 / TA 4).